The sequence spans 310 residues: Ribosomal RNA small subunit methyltransferase H (310 aa).

S-adenosyl-L-methionine is bound by residues 32 to 34, Asp52, Phe79, Asp100, and Gln107; that span reads GGH.

It belongs to the methyltransferase superfamily. RsmH family.

The protein resides in the cytoplasm. It catalyses the reaction cytidine(1402) in 16S rRNA + S-adenosyl-L-methionine = N(4)-methylcytidine(1402) in 16S rRNA + S-adenosyl-L-homocysteine + H(+). Its function is as follows. Specifically methylates the N4 position of cytidine in position 1402 (C1402) of 16S rRNA. This chain is Ribosomal RNA small subunit methyltransferase H, found in Bacillus cereus (strain G9842).